Reading from the N-terminus, the 121-residue chain is Histone H2B (121 aa).

Residues 1–27 are disordered; the sequence is MAPKKAPAAAEKKVKKAPTTEKKNKKK. Ala2 carries the n,N,N-trimethylalanine modification. N6-acetyllysine is present on residues Lys5 and Lys41. Residue Lys115 forms a Glycyl lysine isopeptide (Lys-Gly) (interchain with G-Cter in ubiquitin) linkage.

This sequence belongs to the histone H2B family. As to quaternary structure, the nucleosome is a histone octamer containing two molecules each of H2A, H2B, H3 and H4 assembled in one H3-H4 heterotetramer and two H2A-H2B heterodimers. The octamer wraps approximately 147 bp of DNA. Post-translationally, monoubiquitination of Lys-115 gives a specific tag for epigenetic transcriptional activation and is also prerequisite for histone H3 'Lys-4' and 'Lys-79' methylation. Acetylation occurs almost exclusively in the MAC.

It localises to the nucleus. The protein localises to the chromosome. Functionally, core component of nucleosome. Nucleosomes wrap and compact DNA into chromatin, limiting DNA accessibility to the cellular machineries which require DNA as a template. Histones thereby play a central role in transcription regulation, DNA repair, DNA replication and chromosomal stability. DNA accessibility is regulated via a complex set of post-translational modifications of histones, also called histone code, and nucleosome remodeling. The chain is Histone H2B from Tetrahymena pyriformis.